A 285-amino-acid chain; its full sequence is Acetylglutamate kinase (285 aa).

Substrate is bound by residues 64-65, Arg-86, and Asn-180; that span reads GG.

This sequence belongs to the acetylglutamate kinase family. ArgB subfamily.

Its subcellular location is the plastid. The protein resides in the chloroplast. The enzyme catalyses N-acetyl-L-glutamate + ATP = N-acetyl-L-glutamyl 5-phosphate + ADP. Its pathway is amino-acid biosynthesis; L-arginine biosynthesis; N(2)-acetyl-L-ornithine from L-glutamate: step 2/4. Functionally, catalyzes the ATP-dependent phosphorylation of N-acetyl-L-glutamate. The sequence is that of Acetylglutamate kinase from Gracilaria tenuistipitata var. liui (Red alga).